We begin with the raw amino-acid sequence, 484 residues long: tRNA sulfurtransferase (484 aa).

The 105-residue stretch at 63–167 (REMIERLTCT…LDRLFVIHRQ (105 aa)) folds into the THUMP domain. Residues 185–186 (LM), lysine 267, glycine 289, and glutamine 298 contribute to the ATP site. Residues cysteine 346 and cysteine 457 are joined by a disulfide bond. Residues 405-483 (VLPGQIVIDI…GHTNVRVYRP (79 aa)) enclose the Rhodanese domain. Cysteine 457 serves as the catalytic Cysteine persulfide intermediate.

This sequence belongs to the ThiI family.

The protein resides in the cytoplasm. The enzyme catalyses [ThiI sulfur-carrier protein]-S-sulfanyl-L-cysteine + a uridine in tRNA + 2 reduced [2Fe-2S]-[ferredoxin] + ATP + H(+) = [ThiI sulfur-carrier protein]-L-cysteine + a 4-thiouridine in tRNA + 2 oxidized [2Fe-2S]-[ferredoxin] + AMP + diphosphate. It carries out the reaction [ThiS sulfur-carrier protein]-C-terminal Gly-Gly-AMP + S-sulfanyl-L-cysteinyl-[cysteine desulfurase] + AH2 = [ThiS sulfur-carrier protein]-C-terminal-Gly-aminoethanethioate + L-cysteinyl-[cysteine desulfurase] + A + AMP + 2 H(+). It functions in the pathway cofactor biosynthesis; thiamine diphosphate biosynthesis. Functionally, catalyzes the ATP-dependent transfer of a sulfur to tRNA to produce 4-thiouridine in position 8 of tRNAs, which functions as a near-UV photosensor. Also catalyzes the transfer of sulfur to the sulfur carrier protein ThiS, forming ThiS-thiocarboxylate. This is a step in the synthesis of thiazole, in the thiamine biosynthesis pathway. The sulfur is donated as persulfide by IscS. The sequence is that of tRNA sulfurtransferase from Pseudomonas aeruginosa (strain UCBPP-PA14).